A 441-amino-acid polypeptide reads, in one-letter code: Arginine biosynthesis bifunctional protein ArgJ, mitochondrial (441 aa).

Substrate-binding residues include T177, K204, T215, E301, N436, and S441. The Nucleophile role is filled by T215.

This sequence belongs to the ArgJ family. As to quaternary structure, heterodimer of an alpha and a beta chain. In terms of processing, the alpha and beta chains are autoproteolytically processed from a single precursor protein within the mitochondrion.

It localises to the mitochondrion matrix. The catalysed reaction is N(2)-acetyl-L-ornithine + L-glutamate = N-acetyl-L-glutamate + L-ornithine. It catalyses the reaction L-glutamate + acetyl-CoA = N-acetyl-L-glutamate + CoA + H(+). The protein operates within amino-acid biosynthesis; L-arginine biosynthesis; L-ornithine and N-acetyl-L-glutamate from L-glutamate and N(2)-acetyl-L-ornithine (cyclic): step 1/1. Its pathway is amino-acid biosynthesis; L-arginine biosynthesis; N(2)-acetyl-L-ornithine from L-glutamate: step 1/4. Functionally, catalyzes two activities which are involved in the cyclic version of arginine biosynthesis: the synthesis of acetylglutamate from glutamate and acetyl-CoA, and of ornithine by transacetylation between acetylornithine and glutamate. This Lachancea thermotolerans (strain ATCC 56472 / CBS 6340 / NRRL Y-8284) (Yeast) protein is Arginine biosynthesis bifunctional protein ArgJ, mitochondrial.